Consider the following 132-residue polypeptide: Small ribosomal subunit protein uS8 (132 aa).

The protein belongs to the universal ribosomal protein uS8 family. As to quaternary structure, part of the 30S ribosomal subunit. Contacts proteins S5 and S12.

One of the primary rRNA binding proteins, it binds directly to 16S rRNA central domain where it helps coordinate assembly of the platform of the 30S subunit. The sequence is that of Small ribosomal subunit protein uS8 from Bacillus velezensis (strain DSM 23117 / BGSC 10A6 / LMG 26770 / FZB42) (Bacillus amyloliquefaciens subsp. plantarum).